The chain runs to 175 residues: MRYLPIFVFLGSFGYTETTLTKELIKDAAEKCCTRNRQECCIEIMKFGTPIRCGYDRDPKLPGYVYKCLQNVLFAKEPKKKINLDDSVCCSVFGNDQNDSGRRCENRCKNLMTSPSIDAATRLDSIKSCSLLDNVLYKCFEKCRSLRKDGIKIEVLQFEEYCNATFIQKRTFRGV.

An N-terminal signal peptide occupies residues 1–18 (MRYLPIFVFLGSFGYTET). N-linked (GlcNAc...) asparagine glycosylation is found at N98 and N163.

The protein resides in the secreted. Dictates male development. Probably plays a direct role in cell signaling during C.elegans sex determination. Inhibits the function of tra-2a. This is Protein her-1 (her-1) from Caenorhabditis elegans.